Reading from the N-terminus, the 104-residue chain is Viral histone-like protein (104 aa).

This sequence belongs to the bacterial histone-like protein family. In terms of assembly, homodimer.

Its subcellular location is the virion. With respect to regulation, stilbene derivatives SD1 and SD4 disrupt the binding between pA104R and DNA and inhibit the viral replication in primary alveolar macrophages. Functionally, DNA-binding protein that plays a critical role in nucleoid compaction, genome replication and DNA replication and transcription. Binds to both ssDNA and dsDNA with a binding site covering about 15 nucleotides. Displays DNA-supercoiling activity only when associated with the viral DNA topoisomerase 2. The polypeptide is Viral histone-like protein (African swine fever virus (strain Badajoz 1971 Vero-adapted) (Ba71V)).